The following is a 119-amino-acid chain: Protein Wnt-4 (119 aa).

A lipid anchor (O-palmitoleoyl serine; by PORCN) is attached at serine 1. 2 cysteine pairs are disulfide-bonded: cysteine 69–cysteine 100 and cysteine 85–cysteine 95. A glycan (N-linked (GlcNAc...) asparagine) is linked at asparagine 86.

Belongs to the Wnt family. Palmitoleoylation is required for efficient binding to frizzled receptors. Depalmitoleoylation leads to Wnt signaling pathway inhibition.

It localises to the secreted. Its subcellular location is the extracellular space. The protein localises to the extracellular matrix. Its function is as follows. Ligand for members of the frizzled family of seven transmembrane receptors. Plays an important role in embryonic development. In Plethodon jordani (Red-cheeked salamander), this protein is Protein Wnt-4 (WNT-4).